The primary structure comprises 146 residues: Villin-like protein ABP41 (146 aa).

Belongs to the villin/gelsolin family. Binds to actin. Expressed in pollen (at protein level).

Its subcellular location is the cytoplasm. The protein resides in the cytoskeleton. In terms of biological role, ca(2+)-dependent actin filament-severing protein that is required for pollen tube growth. Probably regulates the dynamics of the actin cytoskeleton. It can promote the assembly of monomers into filaments (nucleation) as well as sever filaments already formed. The chain is Villin-like protein ABP41 from Lilium davidii (David's lily).